The chain runs to 443 residues: D-aminoacyl-tRNA deacylase (443 aa).

This sequence belongs to the DtdA deacylase family. As to quaternary structure, monomer. It depends on Zn(2+) as a cofactor.

The enzyme catalyses a D-aminoacyl-tRNA + H2O = a tRNA + a D-alpha-amino acid + H(+). It catalyses the reaction glycyl-tRNA(Ala) + H2O = tRNA(Ala) + glycine + H(+). D-aminoacyl-tRNA deacylase with broad substrate specificity. By recycling D-aminoacyl-tRNA to D-amino acids and free tRNA molecules, this enzyme counteracts the toxicity associated with the formation of D-aminoacyl-tRNA entities in vivo. The sequence is that of D-aminoacyl-tRNA deacylase from Methanocorpusculum labreanum (strain ATCC 43576 / DSM 4855 / Z).